The sequence spans 257 residues: Type III pantothenate kinase (257 aa).

ATP is bound at residue 6–13 (DVGNTNTV). Residues Tyr-102 and 109 to 112 (GADR) each bind substrate. The active-site Proton acceptor is Asp-111. Asp-131 serves as a coordination point for K(+). Position 134 (Thr-134) interacts with ATP. Residue Thr-186 coordinates substrate.

This sequence belongs to the type III pantothenate kinase family. As to quaternary structure, homodimer. NH4(+) serves as cofactor. The cofactor is K(+).

The protein resides in the cytoplasm. It catalyses the reaction (R)-pantothenate + ATP = (R)-4'-phosphopantothenate + ADP + H(+). Its pathway is cofactor biosynthesis; coenzyme A biosynthesis; CoA from (R)-pantothenate: step 1/5. Functionally, catalyzes the phosphorylation of pantothenate (Pan), the first step in CoA biosynthesis. In Leptospira borgpetersenii serovar Hardjo-bovis (strain JB197), this protein is Type III pantothenate kinase.